Here is a 131-residue protein sequence, read N- to C-terminus: Acanthoscurrin-2 (131 aa).

Residue lysine 130 is modified to Lysine amide.

As to expression, expressed in hemocytes and secreted into the plasma following bacterial immune challenge.

Its subcellular location is the secreted. Antimicrobial protein. Strong activity against the Gram-negative bacterium E.coli SBS363 and yeast C.albicans. No detectable activity against the Gram-positive bacterium M.luteus. The sequence is that of Acanthoscurrin-2 from Acanthoscurria gomesiana (Tarantula spider).